Here is a 248-residue protein sequence, read N- to C-terminus: Adenosylcobinamide-GDP ribazoletransferase (248 aa).

The next 6 membrane-spanning stretches (helical) occupy residues 36-56 (FFLP…YLGL), 59-79 (FLPA…VTGG), 114-134 (GTIA…SLVL), 137-157 (YSIA…FLCL), 170-190 (IFIG…ILAL), and 199-219 (ATII…LLCL).

This sequence belongs to the CobS family. Mg(2+) serves as cofactor.

The protein localises to the cell membrane. It carries out the reaction alpha-ribazole + adenosylcob(III)inamide-GDP = adenosylcob(III)alamin + GMP + H(+). It catalyses the reaction alpha-ribazole 5'-phosphate + adenosylcob(III)inamide-GDP = adenosylcob(III)alamin 5'-phosphate + GMP + H(+). It participates in cofactor biosynthesis; adenosylcobalamin biosynthesis; adenosylcobalamin from cob(II)yrinate a,c-diamide: step 7/7. In terms of biological role, joins adenosylcobinamide-GDP and alpha-ribazole to generate adenosylcobalamin (Ado-cobalamin). Also synthesizes adenosylcobalamin 5'-phosphate from adenosylcobinamide-GDP and alpha-ribazole 5'-phosphate. This Clostridium botulinum (strain Kyoto / Type A2) protein is Adenosylcobinamide-GDP ribazoletransferase.